The primary structure comprises 428 residues: Putative heme-binding peroxidase (428 aa).

The segment at 1 to 33 is disordered; sequence MTAIQKPVVAKREAPKAEVNPTVSRSTQTETIK. Residues 21–32 show a composition bias toward polar residues; it reads PTVSRSTQTETI. His188 acts as the Proton acceptor in catalysis. His312 provides a ligand contact to heme b. Trp328 acts as the Tryptophan radical intermediate in catalysis.

It belongs to the peroxidase family. Cytochrome c peroxidase subfamily. Requires heme b as cofactor.

Functionally, destroys radicals which are normally produced within the cells and which are toxic to biological systems. The sequence is that of Putative heme-binding peroxidase from Debaryomyces hansenii (strain ATCC 36239 / CBS 767 / BCRC 21394 / JCM 1990 / NBRC 0083 / IGC 2968) (Yeast).